The chain runs to 74 residues: ATP synthase subunit c (74 aa).

2 consecutive transmembrane segments (helical) span residues 8 to 28 (FIGIGLMAIGMYGAALGVSNI) and 52 to 72 (IGAGLAEAMGLFSFVIAMLLI).

Belongs to the ATPase C chain family. F-type ATPases have 2 components, F(1) - the catalytic core - and F(0) - the membrane proton channel. F(1) has five subunits: alpha(3), beta(3), gamma(1), delta(1), epsilon(1). F(0) has three main subunits: a(1), b(2) and c(10-14). The alpha and beta chains form an alternating ring which encloses part of the gamma chain. F(1) is attached to F(0) by a central stalk formed by the gamma and epsilon chains, while a peripheral stalk is formed by the delta and b chains.

It is found in the cell inner membrane. Its function is as follows. F(1)F(0) ATP synthase produces ATP from ADP in the presence of a proton or sodium gradient. F-type ATPases consist of two structural domains, F(1) containing the extramembraneous catalytic core and F(0) containing the membrane proton channel, linked together by a central stalk and a peripheral stalk. During catalysis, ATP synthesis in the catalytic domain of F(1) is coupled via a rotary mechanism of the central stalk subunits to proton translocation. In terms of biological role, key component of the F(0) channel; it plays a direct role in translocation across the membrane. A homomeric c-ring of between 10-14 subunits forms the central stalk rotor element with the F(1) delta and epsilon subunits. The polypeptide is ATP synthase subunit c (Rickettsia felis (strain ATCC VR-1525 / URRWXCal2) (Rickettsia azadi)).